Consider the following 507-residue polypeptide: Cytochrome P450 4X1 (507 aa).

Residues 14–34 form a helical membrane-spanning segment; it reads LHLALVFCLALVLMQAMKLYL. Cysteine 452 provides a ligand contact to heme.

This sequence belongs to the cytochrome P450 family. Heme is required as a cofactor. As to expression, expressed in brain and aorta. In the brain, expressed in the Purkinje cells of the cerebellum, pyramidal neurons in the dentate gyrus of the hippocampus, cortical forebrain neurons and those of brain stem nuclei (at protein level). In addition to neurons, also expressed in cerebral vascular endothelial cells (at protein level). Also expressed in epithelial cells of the choroid plexus (at protein level). Hardly detectable in heart, lung, kidney and spleen.

The protein localises to the endoplasmic reticulum membrane. The protein resides in the microsome membrane. It catalyses the reaction N-(5Z,8Z,11Z,14Z-eicosatetraenoyl)-ethanolamine + reduced [NADPH--hemoprotein reductase] + O2 = N-(14,15-epoxy-5Z,8Z,11Z-eicosatrienoyl)-ethanolamine + oxidized [NADPH--hemoprotein reductase] + H2O + H(+). A cytochrome P450 monooxygenase that selectively catalyzes the epoxidation of the last double bond of the arachidonoyl moiety of anandamide, potentially modulating endocannabinoid signaling. Has no hydroxylase activity toward various fatty acids, steroids and prostaglandins. Mechanistically, uses molecular oxygen inserting one oxygen atom into a substrate, and reducing the second into a water molecule, with two electrons provided by NADPH via cytochrome P450 reductase (CPR; NADPH-ferrihemoprotein reductase). The chain is Cytochrome P450 4X1 from Mus musculus (Mouse).